Consider the following 359-residue polypeptide: Peptide chain release factor 1 (359 aa).

At Gln-235 the chain carries N5-methylglutamine. Residues 283 to 294 (SKADEERSESRK) show a composition bias toward basic and acidic residues. Residues 283-309 (SKADEERSESRKSQVGSGDRSERIRTY) are disordered.

This sequence belongs to the prokaryotic/mitochondrial release factor family. Post-translationally, methylated by PrmC. Methylation increases the termination efficiency of RF1.

The protein localises to the cytoplasm. Peptide chain release factor 1 directs the termination of translation in response to the peptide chain termination codons UAG and UAA. This is Peptide chain release factor 1 from Mesorhizobium japonicum (strain LMG 29417 / CECT 9101 / MAFF 303099) (Mesorhizobium loti (strain MAFF 303099)).